The sequence spans 833 residues: Leucine--tRNA ligase (833 aa).

A 'HIGH' region motif is present at residues 41–52 (PYPSGAGLHVGH). Positions 610 to 614 (KMSKS) match the 'KMSKS' region motif. An ATP-binding site is contributed by Lys-613.

The protein belongs to the class-I aminoacyl-tRNA synthetase family.

The protein resides in the cytoplasm. It catalyses the reaction tRNA(Leu) + L-leucine + ATP = L-leucyl-tRNA(Leu) + AMP + diphosphate. This chain is Leucine--tRNA ligase, found in Streptococcus suis (strain 98HAH33).